The chain runs to 161 residues: Nucleotide-binding protein lpl1175 (161 aa).

The protein belongs to the YajQ family.

Nucleotide-binding protein. This is Nucleotide-binding protein lpl1175 from Legionella pneumophila (strain Lens).